The chain runs to 378 residues: MALSTTPSQMSVALPTRIDGSSRSMIKVQSISFTDKSWGPPLLRLDSKSRSLGVKKRSTICMSLQQSSKSKVLVTPLELEDPKETPLNLFRPKEPYTATIVSVERIVGPQAPGETCHIVIDHDGNVPYWEGQSYGVIPPGENPKKPGAPHNVRLYSIASTRYGDSFDGKTASLCVRRAIYYDPETGKEDPSKAGVCSNFLCNAKPGDKVKITGPSGKVMLLPEDDPKATHIMIATGTGVAPYRGYLRRMFMENVPNFKFDGLAWLFLGVANSDSLLYDEEFAGYRKDYPENFRYDKALSREEKNKKGGKMYVQDKIEEYSDEIFKLLDNGAHIYFCGLKGMMPGIQDTLKRVAEERGESWEQKLTQLRKNKQWHVEVY.

The N-terminal 65 residues, methionine 1–glutamine 65, are a transit peptide targeting the chloroplast. The region spanning lysine 93–leucine 221 is the FAD-binding FR-type domain. Cysteines 196 and 201 form a disulfide. Serine 197 bears the Phosphoserine mark. Position 229 is a phosphothreonine (threonine 229). Isoleucine 231 to methionine 249 contributes to the NADP(+) binding site. Residues leucine 349–tryptophan 373 are a coiled coil.

It belongs to the ferredoxin--NADP reductase type 1 family. The cofactor is FAD. Expressed in shoots and roots. Less abundant in roots than RFNR2.

It is found in the plastid. Its subcellular location is the chloroplast. The catalysed reaction is 2 reduced [2Fe-2S]-[ferredoxin] + NADP(+) + H(+) = 2 oxidized [2Fe-2S]-[ferredoxin] + NADPH. Functionally, maintains the supply of reduced ferredoxin under non-photosynthetic conditions. This is Ferredoxin--NADP reductase, root isozyme 1, chloroplastic (RFNR1) from Arabidopsis thaliana (Mouse-ear cress).